The primary structure comprises 507 residues: ATP synthase subunit alpha, chloroplastic (507 aa).

Residue 170–177 (GDRQTGKT) participates in ATP binding. S383 carries the post-translational modification Phosphoserine.

The protein belongs to the ATPase alpha/beta chains family. As to quaternary structure, F-type ATPases have 2 components, CF(1) - the catalytic core - and CF(0) - the membrane proton channel. CF(1) has five subunits: alpha(3), beta(3), gamma(1), delta(1), epsilon(1). CF(0) has four main subunits: a, b, b' and c. Only phosphorylated in mesophyll cells, and only when cells are grown under high rather than low light regimes (70 vs 900 umol photons/m-2/s).

The protein localises to the plastid. The protein resides in the chloroplast thylakoid membrane. It carries out the reaction ATP + H2O + 4 H(+)(in) = ADP + phosphate + 5 H(+)(out). Produces ATP from ADP in the presence of a proton gradient across the membrane. The alpha chain is a regulatory subunit. This is ATP synthase subunit alpha, chloroplastic from Zea mays (Maize).